Reading from the N-terminus, the 427-residue chain is 3-phosphoshikimate 1-carboxyvinyltransferase (427 aa).

Positions 22, 23, and 27 each coordinate 3-phosphoshikimate. Lysine 22 is a phosphoenolpyruvate binding site. The phosphoenolpyruvate site is built by glycine 96 and arginine 124. 3-phosphoshikimate-binding residues include serine 170, serine 171, glutamine 172, serine 199, aspartate 313, asparagine 336, and lysine 340. Residue glutamine 172 participates in phosphoenolpyruvate binding. Residue aspartate 313 is the Proton acceptor of the active site. 3 residues coordinate phosphoenolpyruvate: arginine 344, arginine 386, and lysine 411.

It belongs to the EPSP synthase family. In terms of assembly, monomer.

It is found in the cytoplasm. The enzyme catalyses 3-phosphoshikimate + phosphoenolpyruvate = 5-O-(1-carboxyvinyl)-3-phosphoshikimate + phosphate. It functions in the pathway metabolic intermediate biosynthesis; chorismate biosynthesis; chorismate from D-erythrose 4-phosphate and phosphoenolpyruvate: step 6/7. Its function is as follows. Catalyzes the transfer of the enolpyruvyl moiety of phosphoenolpyruvate (PEP) to the 5-hydroxyl of shikimate-3-phosphate (S3P) to produce enolpyruvyl shikimate-3-phosphate and inorganic phosphate. This chain is 3-phosphoshikimate 1-carboxyvinyltransferase, found in Aeromonas salmonicida.